We begin with the raw amino-acid sequence, 302 residues long: Mitochondrial glycine transporter (302 aa).

3 Solcar repeats span residues 22-112, 119-203, and 213-297; these read HPVF…LKHH, PKPL…AKKL, and FSPV…MMEK. 6 consecutive transmembrane segments (helical) span residues 28-53, 87-113, 125-150, 178-201, 217-243, and 272-290; these read FVCG…TRIQ, GVSP…KHHF, VMLG…TRYE, GLTA…TRAK, LNFS…KTHM, and GGVP…AWTV.

The protein belongs to the mitochondrial carrier (TC 2.A.29) family. SLC25A38 subfamily.

Its subcellular location is the mitochondrion inner membrane. The enzyme catalyses glycine(in) = glycine(out). In terms of biological role, mitochondrial glycine transporter that imports glycine into the mitochondrial matrix. Plays an important role in providing glycine for the first enzymatic step in heme biosynthesis, the condensation of glycine with succinyl-CoA to produce 5-aminolevulinate (ALA) in the mitochondrial matrix. Required during erythropoiesis. Functionally, may play a role as pro-apoptotic protein that induces caspase-dependent apoptosis. This chain is Mitochondrial glycine transporter, found in Xenopus laevis (African clawed frog).